Here is a 207-residue protein sequence, read N- to C-terminus: Nuclear transcription factor Y subunit beta (207 aa).

Residues 1–52 (MTMDGDSSTTDASQLGISADYIGGSHYVIQPHDDTEDSMNDHEDTNGSKESF) are a domain. Residues 27–52 (YVIQPHDDTEDSMNDHEDTNGSKESF) form a disordered region. The segment covering 39 to 52 (MNDHEDTNGSKESF) has biased composition (basic and acidic residues). The segment at 53–142 (REQDIYLPIA…PLKLYLQKFR (90 aa)) is b domain. Residues 59 to 65 (LPIANVA) mediate DNA binding. Positions 86-97 (VQECVSEFISFI) are subunit association domain (SAD). Lys140 is covalently cross-linked (Glycyl lysine isopeptide (Lys-Gly) (interchain with G-Cter in ubiquitin)). The tract at residues 143–207 (EAMKGEKGIG…ISGVQQIQFS (65 aa)) is c domain.

This sequence belongs to the NFYB/HAP3 subunit family. As to quaternary structure, heterotrimeric transcription factor composed of three components, NF-YA, NF-YB and NF-YC. NF-YB and NF-YC must interact and dimerize for NF-YA association and DNA binding. Interacts with C1QBP. Monoubiquitination at Lys-140 plays an important role in transcriptional activation by allowing the deposition of histone H3 methylations as well as histone H2B monoubiquitination at 'Lys-121'.

It localises to the nucleus. Component of the sequence-specific heterotrimeric transcription factor (NF-Y) which specifically recognizes a 5'-CCAAT-3' box motif found in the promoters of its target genes. NF-Y can function as both an activator and a repressor, depending on its interacting cofactors. The polypeptide is Nuclear transcription factor Y subunit beta (Nfyb) (Mus musculus (Mouse)).